Reading from the N-terminus, the 245-residue chain is Tryptophan synthase alpha chain (245 aa).

Residues glutamate 35 and aspartate 46 each act as proton acceptor in the active site.

It belongs to the TrpA family. As to quaternary structure, tetramer of two alpha and two beta chains.

It catalyses the reaction (1S,2R)-1-C-(indol-3-yl)glycerol 3-phosphate + L-serine = D-glyceraldehyde 3-phosphate + L-tryptophan + H2O. It participates in amino-acid biosynthesis; L-tryptophan biosynthesis; L-tryptophan from chorismate: step 5/5. In terms of biological role, the alpha subunit is responsible for the aldol cleavage of indoleglycerol phosphate to indole and glyceraldehyde 3-phosphate. The chain is Tryptophan synthase alpha chain from Sulfurisphaera tokodaii (strain DSM 16993 / JCM 10545 / NBRC 100140 / 7) (Sulfolobus tokodaii).